We begin with the raw amino-acid sequence, 261 residues long: CD40 ligand (261 aa).

Residues 1–22 (MIETYSQPSPRSVAAGPPVSMK) are Cytoplasmic-facing. A helical; Signal-anchor for type II membrane protein transmembrane segment spans residues 23–43 (IFMYLLTVFLITQMIGSALFA). The Extracellular segment spans residues 44–240 (AYLHRRLDKI…LQPGASVFVN (197 aa)). The 140-residue stretch at 122–261 (IAAHVISEAS…GFTSFGLLKL (140 aa)) folds into the THD domain. A disulfide bridge links C178 with C218. N-linked (GlcNAc...) asparagine glycosylation occurs at N240.

Belongs to the tumor necrosis factor family. As to quaternary structure, homotrimer. Interacts with CD28. CD40 ligand, soluble form: Exists as either a monomer or a homotrimer. Forms a ternary complex between CD40 and integrins for CD40-CD40LG signaling. Post-translationally, the soluble form derives from the membrane form by proteolytic processing.

The protein localises to the cell membrane. It localises to the cell surface. The protein resides in the secreted. Its function is as follows. Cytokine that acts as a ligand to CD40/TNFRSF5. Costimulates T-cell proliferation and cytokine production. Its cross-linking on T-cells generates a costimulatory signal which enhances the production of IL4 and IL10 in conjunction with the TCR/CD3 ligation and CD28 costimulation. Induces the activation of NF-kappa-B. Induces the activation of kinases MAPK8 and PAK2 in T-cells. Mediates B-cell proliferation in the absence of co-stimulus as well as IgE production in the presence of IL4. Involved in immunoglobulin class switching. Functionally, acts as a ligand for integrins, specifically ITGA5:ITGB1 and ITGAV:ITGB3; both integrins and the CD40 receptor are required for activation of CD40-CD40LG signaling, which have cell-type dependent effects, such as B-cell activation, NF-kappa-B signaling and anti-apoptotic signaling. This Sus scrofa (Pig) protein is CD40 ligand (CD40LG).